Consider the following 555-residue polypeptide: Dihydroxy-acid dehydratase (555 aa).

Aspartate 78 provides a ligand contact to Mg(2+). Cysteine 119 lines the [2Fe-2S] cluster pocket. Residues aspartate 120 and lysine 121 each coordinate Mg(2+). Lysine 121 carries the N6-carboxylysine modification. Cysteine 192 serves as a coordination point for [2Fe-2S] cluster. Glutamate 444 lines the Mg(2+) pocket. Residue serine 470 is the Proton acceptor of the active site.

This sequence belongs to the IlvD/Edd family. Homodimer. Requires [2Fe-2S] cluster as cofactor. It depends on Mg(2+) as a cofactor.

The catalysed reaction is (2R)-2,3-dihydroxy-3-methylbutanoate = 3-methyl-2-oxobutanoate + H2O. It catalyses the reaction (2R,3R)-2,3-dihydroxy-3-methylpentanoate = (S)-3-methyl-2-oxopentanoate + H2O. Its pathway is amino-acid biosynthesis; L-isoleucine biosynthesis; L-isoleucine from 2-oxobutanoate: step 3/4. It functions in the pathway amino-acid biosynthesis; L-valine biosynthesis; L-valine from pyruvate: step 3/4. Functionally, functions in the biosynthesis of branched-chain amino acids. Catalyzes the dehydration of (2R,3R)-2,3-dihydroxy-3-methylpentanoate (2,3-dihydroxy-3-methylvalerate) into 2-oxo-3-methylpentanoate (2-oxo-3-methylvalerate) and of (2R)-2,3-dihydroxy-3-methylbutanoate (2,3-dihydroxyisovalerate) into 2-oxo-3-methylbutanoate (2-oxoisovalerate), the penultimate precursor to L-isoleucine and L-valine, respectively. This Halalkalibacterium halodurans (strain ATCC BAA-125 / DSM 18197 / FERM 7344 / JCM 9153 / C-125) (Bacillus halodurans) protein is Dihydroxy-acid dehydratase.